Here is a 57-residue protein sequence, read N- to C-terminus: Small ribosomal subunit protein bS21 (57 aa).

This sequence belongs to the bacterial ribosomal protein bS21 family.

This chain is Small ribosomal subunit protein bS21, found in Bacillus anthracis (strain A0248).